The primary structure comprises 473 residues: Adenosylhomocysteinase (473 aa).

Substrate contacts are provided by T64, D139, and E199. 200–202 (TTT) serves as a coordination point for NAD(+). Residues K229 and D233 each contribute to the substrate site. NAD(+) is bound by residues N234, 263 to 268 (GYGDVG), E286, N321, 342 to 344 (IGH), and N387.

This sequence belongs to the adenosylhomocysteinase family. NAD(+) is required as a cofactor.

Its subcellular location is the cytoplasm. The catalysed reaction is S-adenosyl-L-homocysteine + H2O = L-homocysteine + adenosine. The protein operates within amino-acid biosynthesis; L-homocysteine biosynthesis; L-homocysteine from S-adenosyl-L-homocysteine: step 1/1. In terms of biological role, may play a key role in the regulation of the intracellular concentration of adenosylhomocysteine. This chain is Adenosylhomocysteinase, found in Paraburkholderia phymatum (strain DSM 17167 / CIP 108236 / LMG 21445 / STM815) (Burkholderia phymatum).